Here is a 146-residue protein sequence, read N- to C-terminus: Ribonuclease H (146 aa).

Residues 1-142 form the RNase H type-1 domain; that stretch reads MNKIIIYTDG…ADALANLAMD (142 aa). The Mg(2+) site is built by Asp9, Glu47, Asp70, and Asp134.

Belongs to the RNase H family. In terms of assembly, monomer. The cofactor is Mg(2+).

It is found in the cytoplasm. It carries out the reaction Endonucleolytic cleavage to 5'-phosphomonoester.. Endonuclease that specifically degrades the RNA of RNA-DNA hybrids. The chain is Ribonuclease H from Ruthia magnifica subsp. Calyptogena magnifica.